A 1093-amino-acid chain; its full sequence is Carbamoyl phosphate synthase large chain (1093 aa).

A carboxyphosphate synthetic domain region spans residues 1 to 412; it reads MPRRNDIRKI…SLMKALRSLE (412 aa). Residues Arg139, Arg179, Gly185, Gly186, Glu218, Val220, Glu225, Gly251, Val252, His253, Gln295, and Glu309 each contribute to the ATP site. An ATP-grasp 1 domain is found at 143 to 338; the sequence is KDAMTRIGLD…IAKIAAKLAV (196 aa). Gln295, Glu309, and Asn311 together coordinate Mg(2+). Residues Gln295, Glu309, and Asn311 each coordinate Mn(2+). Positions 413-560 are oligomerization domain; the sequence is TGKRVGAEVL…YSSYEEEDEA (148 aa). The segment at 561–952 is carbamoyl phosphate synthetic domain; it reads PQTDKRKVII…AFAKAQLSAG (392 aa). The region spanning 689 to 880 is the ATP-grasp 2 domain; that stretch reads GKLLEQLQIP…LAKIASRLMT (192 aa). Residues Arg725, His764, Leu766, Glu771, Gly796, Ile797, His798, Ser799, Gln839, and Glu851 each coordinate ATP. Mg(2+) is bound by residues Gln839, Glu851, and Asn853. Gln839, Glu851, and Asn853 together coordinate Mn(2+). The MGS-like domain occupies 953–1093; the sequence is LILPSSGTVF…QLLHAGHAVK (141 aa). Residues 953–1093 are allosteric domain; the sequence is LILPSSGTVF…QLLHAGHAVK (141 aa).

Belongs to the CarB family. As to quaternary structure, composed of two chains; the small (or glutamine) chain promotes the hydrolysis of glutamine to ammonia, which is used by the large (or ammonia) chain to synthesize carbamoyl phosphate. Tetramer of heterodimers (alpha,beta)4. Mg(2+) serves as cofactor. Mn(2+) is required as a cofactor.

It carries out the reaction hydrogencarbonate + L-glutamine + 2 ATP + H2O = carbamoyl phosphate + L-glutamate + 2 ADP + phosphate + 2 H(+). The enzyme catalyses hydrogencarbonate + NH4(+) + 2 ATP = carbamoyl phosphate + 2 ADP + phosphate + 2 H(+). Its pathway is amino-acid biosynthesis; L-arginine biosynthesis; carbamoyl phosphate from bicarbonate: step 1/1. It participates in pyrimidine metabolism; UMP biosynthesis via de novo pathway; (S)-dihydroorotate from bicarbonate: step 1/3. Functionally, large subunit of the glutamine-dependent carbamoyl phosphate synthetase (CPSase). CPSase catalyzes the formation of carbamoyl phosphate from the ammonia moiety of glutamine, carbonate, and phosphate donated by ATP, constituting the first step of 2 biosynthetic pathways, one leading to arginine and/or urea and the other to pyrimidine nucleotides. The large subunit (synthetase) binds the substrates ammonia (free or transferred from glutamine from the small subunit), hydrogencarbonate and ATP and carries out an ATP-coupled ligase reaction, activating hydrogencarbonate by forming carboxy phosphate which reacts with ammonia to form carbamoyl phosphate. This Acidobacterium capsulatum (strain ATCC 51196 / DSM 11244 / BCRC 80197 / JCM 7670 / NBRC 15755 / NCIMB 13165 / 161) protein is Carbamoyl phosphate synthase large chain.